We begin with the raw amino-acid sequence, 42 residues long: Photosystem I reaction center subunit IX (42 aa).

Residues Tyr7–Ile27 form a helical membrane-spanning segment.

Belongs to the PsaJ family.

The protein localises to the plastid membrane. In terms of biological role, may help in the organization of the PsaE and PsaF subunits. The polypeptide is Photosystem I reaction center subunit IX (Cuscuta reflexa (Southern Asian dodder)).